Here is a 202-residue protein sequence, read N- to C-terminus: Small ribosomal subunit protein uS4c (202 aa).

Residues Arg13–Thr37 are disordered. Positions Gly20 to Thr37 are enriched in polar residues. One can recognise an S4 RNA-binding domain in the interval Met90–Ile153.

The protein belongs to the universal ribosomal protein uS4 family. As to quaternary structure, part of the 30S ribosomal subunit. Contacts protein S5. The interaction surface between S4 and S5 is involved in control of translational fidelity.

It localises to the plastid. The protein localises to the chloroplast. In terms of biological role, one of the primary rRNA binding proteins, it binds directly to 16S rRNA where it nucleates assembly of the body of the 30S subunit. Functionally, with S5 and S12 plays an important role in translational accuracy. The protein is Small ribosomal subunit protein uS4c (rps4) of Takakia lepidozioides (Moss).